The primary structure comprises 304 residues: Homoserine kinase (304 aa).

91-101 (PLGKGMGSSAA) is an ATP binding site.

Belongs to the GHMP kinase family. Homoserine kinase subfamily.

The protein localises to the cytoplasm. It carries out the reaction L-homoserine + ATP = O-phospho-L-homoserine + ADP + H(+). It participates in amino-acid biosynthesis; L-threonine biosynthesis; L-threonine from L-aspartate: step 4/5. Functionally, catalyzes the ATP-dependent phosphorylation of L-homoserine to L-homoserine phosphate. In Solibacter usitatus (strain Ellin6076), this protein is Homoserine kinase.